Here is a 638-residue protein sequence, read N- to C-terminus: Keratin, type II cytoskeletal 2 oral (638 aa).

A head region spans residues 1–182 (MNRQVCKKSF…DPQIGQVKAQ (182 aa)). Omega-N-methylarginine occurs at positions 85 and 110. Positions 183–218 (EREQIKTLNNKFASFIDKVRFLEQQNKVLETKWELL) are coil 1A. Positions 183 to 496 (EREQIKTLNN…KLLEGEECRM (314 aa)) constitute an IF rod domain. Residues 219–237 (QQQTTGSGPSSLEPCFESY) form a linker 1 region. Residues 238 to 329 (ISFLCKQLDS…TLYEMELSQM (92 aa)) are coil 1B. Positions 330–353 (QSHASDTSVVLSMDNNRCLDLGSI) are linker 12. The segment at 354 to 492 (IAEVRAQYEE…ATYRKLLEGE (139 aa)) is coil 2. The interval 493–638 (ECRMSGECQS…TSSSQHSSTK (146 aa)) is tail. Positions 532-638 (SGSGGYKGGS…TSSSQHSSTK (107 aa)) are disordered. Over residues 540-549 (GSSSSSSSGY) the composition is skewed to low complexity. The span at 550 to 572 (GVSGGSGSGYGGVSSGSTGGRGS) shows a compositional bias: gly residues. Over residues 573–583 (SGSYQSSSSGS) the composition is skewed to low complexity. Residue Arg-584 is modified to Omega-N-methylarginine. Residues 590–608 (SISVSHSGMGSSSGSIQTS) show a composition bias toward low complexity. Over residues 609-620 (GGSGYKSGGGGS) the composition is skewed to gly residues. A compositionally biased stretch (low complexity) spans 626–638 (SQTTSSSQHSSTK).

Belongs to the intermediate filament family. Heterotetramer of two type I and two type II keratins.

Probably contributes to terminal cornification. The polypeptide is Keratin, type II cytoskeletal 2 oral (KRT76) (Homo sapiens (Human)).